The chain runs to 381 residues: Spermidine/putrescine import ATP-binding protein PotA (381 aa).

One can recognise an ABC transporter domain in the interval 22–252 (VELRNVFKFF…PKTSFVADFI (231 aa)). 54 to 61 (GPSGCGKT) contributes to the ATP binding site.

It belongs to the ABC transporter superfamily. Spermidine/putrescine importer (TC 3.A.1.11.1) family. The complex is composed of two ATP-binding proteins (PotA), two transmembrane proteins (PotB and PotC) and a solute-binding protein (PotD).

The protein resides in the cell inner membrane. The catalysed reaction is ATP + H2O + polyamine-[polyamine-binding protein]Side 1 = ADP + phosphate + polyamineSide 2 + [polyamine-binding protein]Side 1.. Functionally, part of the ABC transporter complex PotABCD involved in spermidine/putrescine import. Responsible for energy coupling to the transport system. This Trichormus variabilis (strain ATCC 29413 / PCC 7937) (Anabaena variabilis) protein is Spermidine/putrescine import ATP-binding protein PotA.